The chain runs to 222 residues: Small ribosomal subunit protein uS5 (222 aa).

Residues 1-41 (MAEQAGAGSAQDNRGGGRDDRGGRGRRDDRGGRGGRDDREK) form a disordered region. Residues 15–41 (GGGRDDRGGRGRRDDRGGRGGRDDREK) are compositionally biased toward basic and acidic residues. Residues 44-107 (YLERVVTINR…EEARKNFFRV (64 aa)) form the S5 DRBM domain.

It belongs to the universal ribosomal protein uS5 family. Part of the 30S ribosomal subunit. Contacts proteins S4 and S8.

With S4 and S12 plays an important role in translational accuracy. Functionally, located at the back of the 30S subunit body where it stabilizes the conformation of the head with respect to the body. This chain is Small ribosomal subunit protein uS5, found in Mycolicibacterium gilvum (strain PYR-GCK) (Mycobacterium gilvum (strain PYR-GCK)).